A 155-amino-acid chain; its full sequence is Ribosomal RNA large subunit methyltransferase H (155 aa).

Residues Leu73, Gly104, and Leu123–Leu128 each bind S-adenosyl-L-methionine.

It belongs to the RNA methyltransferase RlmH family. As to quaternary structure, homodimer.

It localises to the cytoplasm. The enzyme catalyses pseudouridine(1915) in 23S rRNA + S-adenosyl-L-methionine = N(3)-methylpseudouridine(1915) in 23S rRNA + S-adenosyl-L-homocysteine + H(+). Functionally, specifically methylates the pseudouridine at position 1915 (m3Psi1915) in 23S rRNA. This Pseudomonas entomophila (strain L48) protein is Ribosomal RNA large subunit methyltransferase H.